Consider the following 131-residue polypeptide: Large ribosomal subunit protein bL19 (131 aa).

This sequence belongs to the bacterial ribosomal protein bL19 family.

In terms of biological role, this protein is located at the 30S-50S ribosomal subunit interface and may play a role in the structure and function of the aminoacyl-tRNA binding site. This chain is Large ribosomal subunit protein bL19, found in Rhodopseudomonas palustris (strain HaA2).